Here is an 883-residue protein sequence, read N- to C-terminus: MNEQYSALRSNVSMLGKVLGDTIKDALGENILDRVETIRKLSKSSRAGNEANRQELLTTLQNLSNDELLPVARAFSQFLNLANTAEQYHSISPNGEAASNPEVIARTLRKLKDQPNLNEDTIKKAVESLSLELVLTAHPTEITRRTLIHKMVEVNSCLKQLDNKDIADYEHHQLMRRLRQLIAQSWHTDEIRKYRPSPVDEAKWGFAVVENSLWEGVPNYLRELNEQLEANLGYQLPVDFVPVRFTSWMGGDRDGNPNVTADITRHVLLLSRWKATDLFLKDVQVLISELSMVECTDELRALAGAEGAQEPYRYLMKKLRTQLMETQAWLEARLKGQKLPKPAGLITQNEQLWEPLYACYKSLQACGMGIIANGELLDTLRRVKSFGVPLVRIDIRQESTRHTEALGEMTRYLGIGDYESWSEADKQAFLIRELNSKRPLLPRQWEPSEETREVLDTCKVIAEAPRGSIAAYVISMAKTPSDVLAVHLLLKEAGIGFALPVAPLFETLDDLNNANDVMTQLLNIDWYRGFIQGKQMVMIGYSDSAKDAGVMAASWAQYQAQDALIKTCEKAGIELTLFHGRGGSIGRGGAPAHAALLSQPPGSLKGGLRVTEQGEMIRFKYGLPEVTISSLSLYTSAILEANLLPPPEPKAEWRDIMAELSDVSCKMYRGYVRENKDFVPYFRSATPEQELGKLPLGSRPAKRRPTGGVESLRAIPWIFAWTQNRLMLPAWLGAGAALQKVVEGGKQSELEAMCRDWPFFSTRLGMLEMVYSKADLWLAEYYDQRLVKPELWALGTELRKLLAADINVVLAIANDSHLMADLPWIAESIQLRNIYTDPLNVLQAELLHRSRQAEEAGKDPDPRVEQALMVTIAGVAAGMRNTG.

Active-site residues include histidine 138 and lysine 546.

This sequence belongs to the PEPCase type 1 family. The cofactor is Mg(2+).

The catalysed reaction is oxaloacetate + phosphate = phosphoenolpyruvate + hydrogencarbonate. Forms oxaloacetate, a four-carbon dicarboxylic acid source for the tricarboxylic acid cycle. This chain is Phosphoenolpyruvate carboxylase, found in Klebsiella pneumoniae (strain 342).